A 609-amino-acid chain; its full sequence is X-ray repair cross-complementing protein 6 (609 aa).

Residues 1–28 are disordered; that stretch reads MSGWESYYKTEGDEEAEEEQEENLEASG. S2 carries the post-translational modification N-acetylserine. S2 is subject to Phosphoserine. S6 bears the Phosphoserine; by PRKDC mark. Residues 12-24 are compositionally biased toward acidic residues; the sequence is GDEEAEEEQEENL. The residue at position 27 (S27) is a Phosphoserine. K31 (schiff-base intermediate with DNA; for 5'-deoxyribose-5-phosphate lyase activity) is an active-site residue. At K31 the chain carries N6-acetyllysine. S51 is modified (phosphoserine; by PRKDC). In terms of domain architecture, Ku spans 261-468; that stretch reads LKLNKDIVIS…VGKMKAIVEK (208 aa). The tract at residues 277–341 is DNA-binding; the sequence is VQKALKPPPI…EETEELKRFD (65 aa). K287 is covalently cross-linked (Glycyl lysine isopeptide (Lys-Gly) (interchain with G-Cter in SUMO2)). The residue at position 306 (S306) is a Phosphoserine. K317, K331, and K338 each carry N6-acetyllysine. A Glycyl lysine isopeptide (Lys-Gly) (interchain with G-Cter in SUMO2) cross-link involves residue K317. Residues 373–482 form an interaction with XRCC5 region; it reads SLVIGSSTLF…YRSDSFENPV (110 aa). T455 is modified (phosphothreonine). The residue at position 461 (K461) is an N6-acetyllysine. S477 and S520 each carry phosphoserine. Positions 536-562 are disordered; that stretch reads PEGKVTKRKHDNEGSGSKRPKVEYSEE. N6-acetyllysine is present on residues K539, K542, and K544. Residue S550 is modified to Phosphoserine. Residues 550-609 are interaction with DEAF1; it reads SGSKRPKVEYSEEELKTHISKGTLGKFTVPMLKEACRAYGLKSGLKKQELLEALTKHFQD. K553 and K556 each carry N6-acetyllysine. K556 is covalently cross-linked (Glycyl lysine isopeptide (Lys-Gly) (interchain with G-Cter in SUMO2)). A Phosphoserine modification is found at S560. K570 is modified (N6,N6,N6-trimethyllysine). The region spanning 573 to 607 is the SAP domain; it reads LGKFTVPMLKEACRAYGLKSGLKKQELLEALTKHF. The interval 578–583 is interaction with BAX; sequence VPMLKE.

The protein belongs to the ku70 family. Forms a heterodimer with XRCC5/Ku80; heterodimerization stabilizes XRCC5 protein. Component of the core long-range non-homologous end joining (NHEJ) complex (also named DNA-PK complex) composed of PRKDC, LIG4, XRCC4, XRCC6/Ku70, XRCC5/Ku86 and NHEJ1/XLF. Additional component of the NHEJ complex includes PAXX. Following autophosphorylation, PRKDC dissociates from DNA, leading to formation of the short-range NHEJ complex, composed of LIG4, XRCC4, XRCC6/Ku70, XRCC5/Ku86 and NHEJ1/XLF. The XRCC5-XRCC6 dimer also associates with NAA15, and this complex binds to the osteocalcin promoter and activates osteocalcin expression. In addition, XRCC6 interacts with the osteoblast-specific transcription factors MSX2, RUNX2 and DLX5. Interacts with ELF3. Interacts with ATP23. The XRCC5-XRRC6 dimer associates in a DNA-dependent manner with APEX1. Binds to CDK9 isoform 2. Identified in a complex with DEAF1 and XRCC5. Interacts with DEAF1 (via the SAND domain); the interaction is direct and may be inhibited by DNA-binding. Interacts with CLU. Interacts with NR4A3; the DNA-dependent protein kinase complex DNA-PK phosphorylates and activates NR4A3 and prevents NR4A3 ubiquitinylation and degradation. Interacts with CYREN isoform 1 (CYREN-1) and isoform 4 (CYREN-2) (via KBM motif). Interacts (via N-terminus) with HSF1 (via N-terminus); this interaction is direct and prevents XRCC5/XRCC6 heterodimeric binding and non-homologous end joining (NHEJ) repair activities induced by ionizing radiation (IR). Part of the HDP-RNP complex composed of at least HEXIM1, PRKDC, XRCC5, XRCC6, paraspeckle proteins (SFPQ, NONO, PSPC1, RBM14, and MATR3) and NEAT1 RNA. Interacts with HMBOX1. Interacts with ATF7. Interacts with APLF (via KBM motif). Interacts with WRN (via KBM motif). The XRCC5-XRCC6 dimer associates with ALKBH2. Interacts with TPRN; TPRN interacts with a number of DNA damage response proteins, is recruited to sites of DNA damage and may play a role in DNA damage repair. When not acetylated, interacts with BAX. Interacts with ERCC6L2. In terms of assembly, (Microbial infection) Interacts with human T-cell leukemia virus 1/HTLV-1 protein HBZ. In terms of processing, phosphorylation by PRKDC may enhance helicase activity. Phosphorylation of Ser-51 does not affect DNA repair. Post-translationally, ADP-ribosylated by PARP3. Methylation by SETD4 leads to accumulation in the cytoplasm and is a prerequisite for acetylation, possibly due to the change of subcellular from the nucleus to the cytosol initiated by methylation, acetylation occurring in the cytosol. In terms of processing, acetylation can be catalyzed in vitro by CREBBP/CBP and KAT2B/PCAF.

It localises to the nucleus. The protein resides in the chromosome. The protein localises to the cytoplasm. In terms of biological role, single-stranded DNA-dependent ATP-dependent helicase that plays a key role in DNA non-homologous end joining (NHEJ) by recruiting DNA-PK to DNA. Required for double-strand break repair and V(D)J recombination. Also has a role in chromosome translocation. Has a role in chromosome translocation. The DNA helicase II complex binds preferentially to fork-like ends of double-stranded DNA in a cell cycle-dependent manner. It works in the 3'-5' direction. During NHEJ, the XRCC5-XRRC6 dimer performs the recognition step: it recognizes and binds to the broken ends of the DNA and protects them from further resection. Binding to DNA may be mediated by XRCC6. The XRCC5-XRRC6 dimer acts as a regulatory subunit of the DNA-dependent protein kinase complex DNA-PK by increasing the affinity of the catalytic subunit PRKDC to DNA by 100-fold. The XRCC5-XRRC6 dimer is probably involved in stabilizing broken DNA ends and bringing them together. The assembly of the DNA-PK complex to DNA ends is required for the NHEJ ligation step. Probably also acts as a 5'-deoxyribose-5-phosphate lyase (5'-dRP lyase), by catalyzing the beta-elimination of the 5' deoxyribose-5-phosphate at an abasic site near double-strand breaks. 5'-dRP lyase activity allows to 'clean' the termini of abasic sites, a class of nucleotide damage commonly associated with strand breaks, before such broken ends can be joined. The XRCC5-XRRC6 dimer together with APEX1 acts as a negative regulator of transcription. In association with NAA15, the XRCC5-XRRC6 dimer binds to the osteocalcin promoter and activates osteocalcin expression. Plays a role in the regulation of DNA virus-mediated innate immune response by assembling into the HDP-RNP complex, a complex that serves as a platform for IRF3 phosphorylation and subsequent innate immune response activation through the cGAS-STING pathway. Negatively regulates apoptosis by interacting with BAX and sequestering it from the mitochondria. Might have deubiquitination activity, acting on BAX. This chain is X-ray repair cross-complementing protein 6 (XRCC6), found in Homo sapiens (Human).